The following is a 67-amino-acid chain: Gallinacin-6 (67 aa).

The signal sequence occupies residues 1–19 (MRILYLLLSVLFVVLQGVA). Residues 20–25 (GQPYFS) constitute a propeptide that is removed on maturation. Disulfide bonds link cysteine 31/cysteine 60, cysteine 38/cysteine 53, and cysteine 43/cysteine 61.

This sequence belongs to the beta-defensin family. Expressed in bone marrow, testis, ovary, lung and trachea. Expressed in the ovarian stroma, but not in the ovarian follicles.

It is found in the secreted. The protein resides in the cytoplasmic granule. In terms of biological role, has bactericidal activity. Potent activity against S.typhimurium and S.entiriditis. The protein is Gallinacin-6 (GAL6) of Gallus gallus (Chicken).